The chain runs to 288 residues: 4-hydroxy-3-methylbut-2-enyl diphosphate reductase (288 aa).

A [4Fe-4S] cluster-binding site is contributed by cysteine 12. The (2E)-4-hydroxy-3-methylbut-2-enyl diphosphate site is built by histidine 42 and histidine 77. Dimethylallyl diphosphate is bound by residues histidine 42 and histidine 77. Isopentenyl diphosphate-binding residues include histidine 42 and histidine 77. Position 99 (cysteine 99) interacts with [4Fe-4S] cluster. Histidine 127 serves as a coordination point for (2E)-4-hydroxy-3-methylbut-2-enyl diphosphate. Histidine 127 is a dimethylallyl diphosphate binding site. An isopentenyl diphosphate-binding site is contributed by histidine 127. The active-site Proton donor is the glutamate 129. Residue threonine 165 participates in (2E)-4-hydroxy-3-methylbut-2-enyl diphosphate binding. [4Fe-4S] cluster is bound at residue cysteine 193. 4 residues coordinate (2E)-4-hydroxy-3-methylbut-2-enyl diphosphate: serine 221, serine 222, asparagine 223, and serine 265. Residues serine 221, serine 222, asparagine 223, and serine 265 each coordinate dimethylallyl diphosphate. Serine 221, serine 222, asparagine 223, and serine 265 together coordinate isopentenyl diphosphate.

It belongs to the IspH family. Requires [4Fe-4S] cluster as cofactor.

It carries out the reaction isopentenyl diphosphate + 2 oxidized [2Fe-2S]-[ferredoxin] + H2O = (2E)-4-hydroxy-3-methylbut-2-enyl diphosphate + 2 reduced [2Fe-2S]-[ferredoxin] + 2 H(+). It catalyses the reaction dimethylallyl diphosphate + 2 oxidized [2Fe-2S]-[ferredoxin] + H2O = (2E)-4-hydroxy-3-methylbut-2-enyl diphosphate + 2 reduced [2Fe-2S]-[ferredoxin] + 2 H(+). The protein operates within isoprenoid biosynthesis; dimethylallyl diphosphate biosynthesis; dimethylallyl diphosphate from (2E)-4-hydroxy-3-methylbutenyl diphosphate: step 1/1. It participates in isoprenoid biosynthesis; isopentenyl diphosphate biosynthesis via DXP pathway; isopentenyl diphosphate from 1-deoxy-D-xylulose 5-phosphate: step 6/6. In terms of biological role, catalyzes the conversion of 1-hydroxy-2-methyl-2-(E)-butenyl 4-diphosphate (HMBPP) into a mixture of isopentenyl diphosphate (IPP) and dimethylallyl diphosphate (DMAPP). Acts in the terminal step of the DOXP/MEP pathway for isoprenoid precursor biosynthesis. This Thermoanaerobacter pseudethanolicus (strain ATCC 33223 / 39E) (Clostridium thermohydrosulfuricum) protein is 4-hydroxy-3-methylbut-2-enyl diphosphate reductase.